The following is a 249-amino-acid chain: 2,3-bisphosphoglycerate-dependent phosphoglycerate mutase (249 aa).

Residues 7–14 (RHGESEWN), 20–21 (TG), Arg-59, 86–89 (ERHY), Lys-97, 113–114 (RR), and 182–183 (GN) contribute to the substrate site. Catalysis depends on His-8, which acts as the Tele-phosphohistidine intermediate. Glu-86 functions as the Proton donor/acceptor in the catalytic mechanism.

This sequence belongs to the phosphoglycerate mutase family. BPG-dependent PGAM subfamily.

The catalysed reaction is (2R)-2-phosphoglycerate = (2R)-3-phosphoglycerate. It participates in carbohydrate degradation; glycolysis; pyruvate from D-glyceraldehyde 3-phosphate: step 3/5. Functionally, catalyzes the interconversion of 2-phosphoglycerate and 3-phosphoglycerate. The protein is 2,3-bisphosphoglycerate-dependent phosphoglycerate mutase of Lachnoclostridium phytofermentans (strain ATCC 700394 / DSM 18823 / ISDg) (Clostridium phytofermentans).